A 1003-amino-acid chain; its full sequence is Serine/threonine-protein kinase spk-1 (1003 aa).

3 disordered regions span residues 92–112 (NSTN…TQNE), 169–309 (NEND…SATS), and 337–408 (RPSI…KRGG). The span at 202–211 (SDEEDVESQD) shows a compositional bias: acidic residues. The segment covering 248–265 (SNDDKNEKDVLVDEDTSK) has biased composition (basic and acidic residues). A compositionally biased stretch (low complexity) spans 285–300 (TIDSSVSSSTSSSSTG). The span at 346–359 (KKTEVNANEERLDD) shows a compositional bias: basic and acidic residues. Residues 422-904 (YHVIRKLGWG…AKIALKHPFL (483 aa)) enclose the Protein kinase domain. ATP contacts are provided by residues 428 to 436 (LGWGHFSTV) and Lys451. The Proton acceptor role is filled by Asp555. The tract at residues 927 to 1003 (DGLIPEPFDG…DIERFQLDLQ (77 aa)) is disordered. Over residues 936–953 (GNEHQEVYRDENDSRSAS) the composition is skewed to basic and acidic residues. Over residues 954–964 (ERSANSRSAGG) the composition is skewed to low complexity. Over residues 983–992 (VITNNETTDI) the composition is skewed to polar residues. The segment covering 994–1003 (DIERFQLDLQ) has biased composition (basic and acidic residues).

The protein belongs to the protein kinase superfamily. Ser/Thr protein kinase family. In terms of assembly, interacts with rsp-3. Predominantly coexpressed with rsp-3 in adult hermaphrodite germlines.

The catalysed reaction is L-seryl-[protein] + ATP = O-phospho-L-seryl-[protein] + ADP + H(+). The enzyme catalyses L-threonyl-[protein] + ATP = O-phospho-L-threonyl-[protein] + ADP + H(+). In terms of biological role, required for embryogenesis and germline development in both adult hermaphrodites and males. SR-protein kinase (SRPK) that binds directly to and phosphorylates the RS domain of rsp-3/CeSF2 in vitro. This Caenorhabditis elegans protein is Serine/threonine-protein kinase spk-1 (spk-1).